The chain runs to 496 residues: Ganglioside-induced differentiation-associated protein 2 (496 aa).

Disordered stretches follow at residues 22–45 (VRDGEGEDVPDGGRKDAPHGGLHS) and 252–271 (PERQIRISEKPGGQDDDSEE). One can recognise a Macro domain in the interval 44 to 224 (HSPFPYRNDI…TYRRLLPLYF (181 aa)). The segment covering 254 to 264 (RQIRISEKPGG) has biased composition (basic and acidic residues). The CRAL-TRIO domain maps to 329–483 (DLSDIAALKA…FVLDYDAREN (155 aa)).

Belongs to the GDAP2 family.

The protein is Ganglioside-induced differentiation-associated protein 2 of Xenopus tropicalis (Western clawed frog).